A 108-amino-acid polypeptide reads, in one-letter code: Iron-sulfur cluster assembly protein CyaY (108 aa).

The protein belongs to the frataxin family.

Functionally, involved in iron-sulfur (Fe-S) cluster assembly. May act as a regulator of Fe-S biogenesis. The protein is Iron-sulfur cluster assembly protein CyaY of Pseudoalteromonas atlantica (strain T6c / ATCC BAA-1087).